The primary structure comprises 185 residues: Ribose 1,5-bisphosphate phosphokinase PhnN (185 aa).

Position 10 to 17 (10 to 17 (GPSGSGKD)) interacts with ATP.

It belongs to the ribose 1,5-bisphosphokinase family.

The enzyme catalyses alpha-D-ribose 1,5-bisphosphate + ATP = 5-phospho-alpha-D-ribose 1-diphosphate + ADP. The protein operates within metabolic intermediate biosynthesis; 5-phospho-alpha-D-ribose 1-diphosphate biosynthesis; 5-phospho-alpha-D-ribose 1-diphosphate from D-ribose 5-phosphate (route II): step 3/3. Functionally, catalyzes the phosphorylation of ribose 1,5-bisphosphate to 5-phospho-D-ribosyl alpha-1-diphosphate (PRPP). The chain is Ribose 1,5-bisphosphate phosphokinase PhnN from Pseudomonas paraeruginosa (strain DSM 24068 / PA7) (Pseudomonas aeruginosa (strain PA7)).